The chain runs to 290 residues: Light-independent protochlorophyllide reductase iron-sulfur ATP-binding protein (290 aa).

ATP-binding positions include 10-15 and lysine 39; that span reads GIGKST. Serine 14 contacts Mg(2+). [4Fe-4S] cluster is bound by residues cysteine 95 and cysteine 129. ATP is bound at residue 180–181; the sequence is NR.

The protein belongs to the NifH/BchL/ChlL family. In terms of assembly, homodimer. Protochlorophyllide reductase is composed of three subunits; ChlL, ChlN and ChlB. [4Fe-4S] cluster is required as a cofactor.

The protein localises to the plastid. It is found in the chloroplast. The enzyme catalyses chlorophyllide a + oxidized 2[4Fe-4S]-[ferredoxin] + 2 ADP + 2 phosphate = protochlorophyllide a + reduced 2[4Fe-4S]-[ferredoxin] + 2 ATP + 2 H2O. The protein operates within porphyrin-containing compound metabolism; chlorophyll biosynthesis (light-independent). Functionally, component of the dark-operative protochlorophyllide reductase (DPOR) that uses Mg-ATP and reduced ferredoxin to reduce ring D of protochlorophyllide (Pchlide) to form chlorophyllide a (Chlide). This reaction is light-independent. The L component serves as a unique electron donor to the NB-component of the complex, and binds Mg-ATP. This Cycas taitungensis (Prince sago) protein is Light-independent protochlorophyllide reductase iron-sulfur ATP-binding protein.